The primary structure comprises 105 residues: Cortistatin (105 aa).

Residues 1 to 18 (MPLSPGLLLLLLSGATAT) form the signal peptide. Residues 19-74 (AALPLEGGPTGRDSEHMQEAAGIRKSSLLTFLAWWFEWTSQASAGPLIGEEAREVA) constitute a propeptide that is removed on maturation. Cys93 and Cys104 form a disulfide bridge.

It belongs to the somatostatin family. In terms of tissue distribution, expressed in a subset of GABAergic cells in the cortex and hippocampus.

Its subcellular location is the secreted. In terms of biological role, binds to all human somatostatin receptor (SSTR) subtypes. It also inhibits cAMP production induced by forskolin through SSTRs. The chain is Cortistatin (CORT) from Homo sapiens (Human).